We begin with the raw amino-acid sequence, 375 residues long: MTPILFVDRDGTLIVEPADYQIDAYEKLRLVDHVIPAMLKLRDAGYQFVIVSNQDGLGSESYPRASFDGPNNLMLQIFASQGIEFREVLIDCSWPADNAPTRKPGIGLMVPYLQDRTIDWARSAMVGDRITDIQFAQNLNIRGFQLRTDEFGGEWDWSGIAHELADAPRRALVQRNTKETRIRVELDLDRVAEPKTATGLPFFDHMLEQIGKHGGFALEIRAEGDLHIDEHHTIEDTGLALGQALREALGDKRGIGRYGFDPESSPWRVAGDTPQHGFTLPMDETIASAALDFSGRPYFVFEGEFKRERVGDMPTELVPHFFRSICDASGLNLHLTVRGENDHHKVEACFKALARALRQAIRREGTALPTTKGTL.

Residues 1-168 (MTPILFVDRD…GIAHELADAP (168 aa)) are histidinol-phosphatase. Catalysis depends on Asp8, which acts as the Nucleophile. 3 residues coordinate Mg(2+): Asp8, Asp10, and Asp128. Residue Asp10 is the Proton donor of the active site. Residues 169–375 (RRALVQRNTK…TALPTTKGTL (207 aa)) are imidazoleglycerol-phosphate dehydratase.

It in the N-terminal section; belongs to the histidinol-phosphatase family. The protein in the C-terminal section; belongs to the imidazoleglycerol-phosphate dehydratase family. It depends on Mg(2+) as a cofactor.

It localises to the cytoplasm. It carries out the reaction D-erythro-1-(imidazol-4-yl)glycerol 3-phosphate = 3-(imidazol-4-yl)-2-oxopropyl phosphate + H2O. It catalyses the reaction L-histidinol phosphate + H2O = L-histidinol + phosphate. It participates in amino-acid biosynthesis; L-histidine biosynthesis; L-histidine from 5-phospho-alpha-D-ribose 1-diphosphate: step 6/9. Its pathway is amino-acid biosynthesis; L-histidine biosynthesis; L-histidine from 5-phospho-alpha-D-ribose 1-diphosphate: step 8/9. In Xanthomonas axonopodis pv. citri (strain 306), this protein is Histidine biosynthesis bifunctional protein HisB.